The chain runs to 70 residues: Large ribosomal subunit protein eL38 (70 aa).

Lys-4 participates in a covalent cross-link: Glycyl lysine isopeptide (Lys-Gly) (interchain with G-Cter in SUMO2). Residue Lys-9 is modified to N6-acetyllysine; alternate. A Glycyl lysine isopeptide (Lys-Gly) (interchain with G-Cter in SUMO2); alternate cross-link involves residue Lys-9. Lys-67 bears the N6-acetyllysine mark.

Belongs to the eukaryotic ribosomal protein eL38 family. In terms of assembly, component of the large ribosomal subunit.

The protein localises to the cytoplasm. Functionally, component of the large ribosomal subunit. The ribosome is a large ribonucleoprotein complex responsible for the synthesis of proteins in the cell. The protein is Large ribosomal subunit protein eL38 (RPL38) of Macaca fascicularis (Crab-eating macaque).